A 290-amino-acid polypeptide reads, in one-letter code: MDKIIKTISESGAFRAFVLDSTETVRTAQEKHQTQASSTVALGRTLIASQILAANEKGNTKLTVKVLGSSSLGAIITVADTKGNVKGYVQNPGVDIKKTATGEVLVGPFVGNGQFLVITDYGTGNPYNSITPLISGEIGEDLAFYLTESQQTPSAVGLNVLLDEEDKVKVAGGFLVQVLPGAKKEEIARFEKRIQEMPAISTLLESDDHIEALLKAIYGDEAYKRLSEEEIRFQCDCSHERFMNALASLPSSDLQEMKEEDHGAEITCQFCQTTYNFDEKDLEELIRDKS.

Disulfide bonds link C235/C237 and C268/C271.

Belongs to the HSP33 family. Post-translationally, under oxidizing conditions two disulfide bonds are formed involving the reactive cysteines. Under reducing conditions zinc is bound to the reactive cysteines and the protein is inactive.

The protein localises to the cytoplasm. Redox regulated molecular chaperone. Protects both thermally unfolding and oxidatively damaged proteins from irreversible aggregation. Plays an important role in the bacterial defense system toward oxidative stress. This Streptococcus pneumoniae (strain P1031) protein is 33 kDa chaperonin.